A 407-amino-acid chain; its full sequence is Immunoglobulin superfamily member 5 (407 aa).

Topologically, residues M1–K266 are extracellular. Ig-like V-type domains lie at N39–Q139 and G142–N231. N59, N103, N210, and N231 each carry an N-linked (GlcNAc...) asparagine glycan. Intrachain disulfides connect C60–C123 and C163–C215. A helical transmembrane segment spans residues V267 to I285. Residues R286–V407 lie on the Cytoplasmic side of the membrane. Over residues K320–E331 the composition is skewed to basic and acidic residues. Residues K320–V407 form a disordered region. Positions P389 to V407 are enriched in polar residues.

It belongs to the immunoglobulin superfamily. Interacts with MAGI1 at tight junctions, forms a tripartite complex with NPHS1. Interacts with LNX1 isoform 2 via its PDZ 2 domain, it may also interact with other isoforms containing this domain.

Its subcellular location is the apical cell membrane. The protein resides in the cell junction. It is found in the tight junction. Functionally, provides, together with MAGI1, an adhesion machinery at tight junctions, which may regulate the permeability of kidney glomerulus and small intestinal epithelial cells. Mediates calcium-independent homophilic cell adhesion. In testis, it may function as a cell adhesion molecule rather than a tight-junction protein. It may participate in the adhesion between spermatogonia-spermatogonia, spermatogonia-Sertoli cells, and Sertoli cells-Sertoli cells. In Homo sapiens (Human), this protein is Immunoglobulin superfamily member 5 (IGSF5).